The chain runs to 81 residues: DGASIFSANCASCHMGGKNVVNAAKTLKKEDLVKYGKDSVEAIVTQVTKGMGAMPAFGGRLSAEDIEAVANYVLAQAEKGW.

The heme c site is built by Cys-10, Cys-13, His-14, and Met-54.

It belongs to the cytochrome c family. PetJ subfamily. Monomer. Post-translationally, binds 1 heme c group covalently per subunit.

The protein resides in the cellular thylakoid lumen. In terms of biological role, functions as an electron carrier between membrane-bound cytochrome b6-f and photosystem I in oxygenic photosynthesis. In Microcystis aeruginosa, this protein is Cytochrome c6 (petJ).